The chain runs to 391 residues: Phosphoglycerate kinase (391 aa).

Residues 21 to 23, arginine 36, 59 to 62, arginine 113, and arginine 146 each bind substrate; these read DLN and HLGR. Residues lysine 197, glutamate 319, and 345–348 each bind ATP; that span reads GGDT.

It belongs to the phosphoglycerate kinase family. As to quaternary structure, monomer.

Its subcellular location is the cytoplasm. The catalysed reaction is (2R)-3-phosphoglycerate + ATP = (2R)-3-phospho-glyceroyl phosphate + ADP. The protein operates within carbohydrate degradation; glycolysis; pyruvate from D-glyceraldehyde 3-phosphate: step 2/5. This chain is Phosphoglycerate kinase, found in Shewanella putrefaciens (strain CN-32 / ATCC BAA-453).